We begin with the raw amino-acid sequence, 401 residues long: Phosphoglycerate kinase (401 aa).

Substrate is bound by residues 21-23 (DLN), arginine 37, 60-63 (HLGR), arginine 119, and arginine 152. ATP-binding positions include lysine 203, glutamate 325, and 351-354 (GGDT).

It belongs to the phosphoglycerate kinase family. As to quaternary structure, monomer.

It is found in the cytoplasm. It catalyses the reaction (2R)-3-phosphoglycerate + ATP = (2R)-3-phospho-glyceroyl phosphate + ADP. Its pathway is carbohydrate degradation; glycolysis; pyruvate from D-glyceraldehyde 3-phosphate: step 2/5. The chain is Phosphoglycerate kinase from Acidithiobacillus ferrooxidans (strain ATCC 23270 / DSM 14882 / CIP 104768 / NCIMB 8455) (Ferrobacillus ferrooxidans (strain ATCC 23270)).